The chain runs to 621 residues: MTAREVGRIGLRKLLQRIGIVAESMTPLATDPVEVTQLLDARWYDERLRALADELGRDPDSVRAEAAGYLREMAASLDERAVQAWRGFSRWLMRAYDVLVDEDQITQLRKLDRKATLAFAFSHRSYLDGMLLPEAILANRLSPALTFGGANLNFFPMGAWAKRTGAIFIRRQTKDIPVYRFVLRAYAAQLVQNHVNLTWSIEGGRTRTGKLRPPVFGILRYITDAVDEIDGPEVYLVPTSIVYDQLHEVEAMTTEAYGAVKRPEDLRFLVRLARQQGERLGRAYLDFGEPLPLRKRLQEMRADKSGTGSEIERIALDVEHRINRATPVTPTAVVSLALLGADRSLSISEVLATVRPLASYIAARNWAVAGAADLTNRSTIRWTLHQMVASGVVSVYDAGTEAVWGIGEDQHLVAAFYRNTAIHILVDRAVAELALLAAAETTTNGSVSPATVRDEALSLRDLLKFEFLFSGRAQFEKDLANEVLLIGSVVDTSKPAAAADVWRLLESADVLLAHLVLRPFLDAYHIVADRLAAHEDDSFDEEGFLAECLQVGKQWELQRNIASAESRSMELFKTALRLARHRELVDGADATDIAKRRQQFADEIATATRRVNTIAELARRQ.

Positions H123–D128 match the HXXXXD motif motif.

This sequence belongs to the GPAT/DAPAT family.

It is found in the cell membrane. This Mycobacterium bovis (strain ATCC BAA-935 / AF2122/97) protein is Putative acyltransferase plsB1 (plsB1).